The primary structure comprises 185 residues: MIADIKKDAQERMGKCVEATKNQMAKVRTGRAHPSLLDSIQVSYYGTMTPLNQVANVGIEDARTLSVTVFDRSAIQAVEKAIMSSDLGLNPMSAGATLRIPLPALTEERRKDFIKVVRAEAEGGRVAIRNVRRDAISEVKKLEKAKECTEDDVRRFEDEVQKFTDAHIKKVDEILAAKEIELMEV.

Belongs to the RRF family.

The protein resides in the cytoplasm. Responsible for the release of ribosomes from messenger RNA at the termination of protein biosynthesis. May increase the efficiency of translation by recycling ribosomes from one round of translation to another. The chain is Ribosome-recycling factor from Shewanella sp. (strain ANA-3).